A 211-amino-acid polypeptide reads, in one-letter code: Claudin-13 (211 aa).

At Met1–Ala8 the chain is on the cytoplasmic side. Residues Ile9–Val29 traverse the membrane as a helical segment. The Extracellular portion of the chain corresponds to Trp30–Arg80. Residues Val81 to Asp101 form a helical membrane-spanning segment. Topologically, residues Trp102 to Lys118 are cytoplasmic. Residues Val119–Thr139 traverse the membrane as a helical segment. Residues His140–Leu165 lie on the Extracellular side of the membrane. The chain crosses the membrane as a helical span at residues Ala166 to Val186. Topologically, residues Cys187–Val211 are cytoplasmic.

The protein belongs to the claudin family.

The protein localises to the cell junction. Its subcellular location is the tight junction. The protein resides in the cell membrane. In terms of biological role, plays a major role in tight junction-specific obliteration of the intercellular space, through calcium-independent cell-adhesion activity. The polypeptide is Claudin-13 (Cldn13) (Mus musculus (Mouse)).